The sequence spans 287 residues: Membrane protein insertase YidC 2 (287 aa).

An N-terminal signal peptide occupies residues 1–26 (MKKKKRFKQKLLIASLVIGLVAVLSG). Cys-27 carries N-palmitoyl cysteine lipidation. Cys-27 carries S-diacylglycerol cysteine lipidation. 5 helical membrane-spanning segments follow: residues 65 to 85 (YAVG…PLMI), 135 to 155 (MMGC…YQAI), 178 to 198 (YILP…SMMG), 207 to 224 (AMIV…GITL), and 228 to 250 (LALY…NNPF).

The protein belongs to the OXA1/ALB3/YidC family. Type 2 subfamily.

The protein resides in the cell membrane. Required for the insertion and/or proper folding and/or complex formation of integral membrane proteins into the membrane. Involved in integration of membrane proteins that insert both dependently and independently of the Sec translocase complex, as well as at least some lipoproteins. This is Membrane protein insertase YidC 2 from Listeria innocua serovar 6a (strain ATCC BAA-680 / CLIP 11262).